A 204-amino-acid polypeptide reads, in one-letter code: Large ribosomal subunit protein eL15 (204 aa).

This sequence belongs to the eukaryotic ribosomal protein eL15 family. In terms of assembly, component of the large ribosomal subunit.

The protein localises to the cytoplasm. Its function is as follows. Component of the large ribosomal subunit. The ribosome is a large ribonucleoprotein complex responsible for the synthesis of proteins in the cell. The polypeptide is Large ribosomal subunit protein eL15 (rpl15) (Silurus meridionalis (Southern catfish)).